Consider the following 130-residue polypeptide: Small ribosomal subunit protein uS9 (130 aa).

Residues 106–130 form a disordered region; sequence RDSRKVERKKPGLKKARKASQFSKR. Over residues 111 to 130 the composition is skewed to basic residues; that stretch reads VERKKPGLKKARKASQFSKR.

Belongs to the universal ribosomal protein uS9 family.

This Streptococcus pneumoniae (strain ATCC 700669 / Spain 23F-1) protein is Small ribosomal subunit protein uS9.